Here is a 341-residue protein sequence, read N- to C-terminus: Beta-hexosaminidase (341 aa).

Residues Asp61, Arg69, Arg134, and 164 to 165 (KH) contribute to the substrate site. Residue His177 is the Proton donor/acceptor of the active site. Asp249 (nucleophile) is an active-site residue.

Belongs to the glycosyl hydrolase 3 family. NagZ subfamily.

The protein resides in the cytoplasm. The catalysed reaction is Hydrolysis of terminal non-reducing N-acetyl-D-hexosamine residues in N-acetyl-beta-D-hexosaminides.. Its pathway is cell wall biogenesis; peptidoglycan recycling. Its function is as follows. Plays a role in peptidoglycan recycling by cleaving the terminal beta-1,4-linked N-acetylglucosamine (GlcNAc) from peptide-linked peptidoglycan fragments, giving rise to free GlcNAc, anhydro-N-acetylmuramic acid and anhydro-N-acetylmuramic acid-linked peptides. In Shewanella frigidimarina (strain NCIMB 400), this protein is Beta-hexosaminidase.